The primary structure comprises 278 residues: Probable cytochrome c oxidase subunit 3 (278 aa).

Transmembrane regions (helical) follow at residues 21–41 (PWPV…VSFM), 46–66 (FNIY…YSWW), 89–109 (IGMA…FASF), 174–194 (CVTA…MQAY), 212–232 (FYLA…FLIV), and 256–276 (AWYW…VYIF).

This sequence belongs to the cytochrome c oxidase subunit 3 family.

Its subcellular location is the cell membrane. It carries out the reaction 4 Fe(II)-[cytochrome c] + O2 + 8 H(+)(in) = 4 Fe(III)-[cytochrome c] + 2 H2O + 4 H(+)(out). The chain is Probable cytochrome c oxidase subunit 3 (ctaE) from Rickettsia felis (strain ATCC VR-1525 / URRWXCal2) (Rickettsia azadi).